A 280-amino-acid polypeptide reads, in one-letter code: Undecaprenyl-diphosphatase (280 aa).

8 consecutive transmembrane segments (helical) span residues 3–23, 45–65, 88–108, 115–135, 150–170, 191–211, 225–245, and 255–275; these read IILL…EFLP, VDLF…YDYW, QLGL…FTFA, LFDP…IFYV, VGLK…IPGT, AEFS…LDLL, VLGI…RLLV, and IFAW…WGFG.

It belongs to the UppP family.

It is found in the cell inner membrane. The catalysed reaction is di-trans,octa-cis-undecaprenyl diphosphate + H2O = di-trans,octa-cis-undecaprenyl phosphate + phosphate + H(+). Functionally, catalyzes the dephosphorylation of undecaprenyl diphosphate (UPP). Confers resistance to bacitracin. This chain is Undecaprenyl-diphosphatase, found in Psychrobacter arcticus (strain DSM 17307 / VKM B-2377 / 273-4).